A 1538-amino-acid polypeptide reads, in one-letter code: Lhr helicase/uracil glycosylase (1538 aa).

Positions 1-897 (MADNPDPSSL…ERRASVLSLD (897 aa)) are lhr-Core. 8 residues coordinate ATP: Q34, K57, T58, D179, E180, I398, R415, and H418. Residues 38-235 (WHVAARSEHA…FLGGDRPVTV (198 aa)) form the Helicase ATP-binding domain. A DEVH box motif is present at residues 179–182 (DEVH). The Helicase C-terminal domain occupies 284-462 (GILDEVLRHR…NLTPPHNPLD (179 aa)). Positions 463 to 552 (VLAQQTVAAA…VTSGGTIPDR (90 aa)) are beta-sheet bundle. Positions 553 to 623 (GMYSVLLPEG…SARLPFWRGE (71 aa)) are WH domain. The interval 624–897 (GNGRPAELGE…ERRASVLSLD (274 aa)) is domain 4. The interval 898 to 1538 (SELLRNLLGQ…SSSPQGLDWG (641 aa)) is lhr-CTD. The segment at 1287–1312 (SNARTSTRRSHRARRGRPVYAQPVSP) is disordered. Positions 1292-1303 (STRRSHRARRGR) are enriched in basic residues.

This sequence belongs to the Lhr helicase family. Homooligomerizes, probably a homotetramer. It depends on Ca(2+) as a cofactor. Uracil deglycosylase activity does not require a cofactor. serves as cofactor.

The catalysed reaction is Couples ATP hydrolysis with the unwinding of duplex DNA by translocating in the 3'-5' direction.. It catalyses the reaction ATP + H2O = ADP + phosphate + H(+). The enzyme catalyses Hydrolyzes single-stranded DNA or mismatched double-stranded DNA and polynucleotides, releasing free uracil.. Its function is as follows. A 3'-5' helicase probably involved in DNA repair. Translocates in an ATP-dependent manner 3'-to-5' on single-stranded (ss)DNA, unwinding any encountered duplex nucleic acid. An RNA:DNA hybrid with a 3'-ssDNA loading strand is a 4.5-fold better helicase substrate than 3'-tailed double-stranded (ds)DNA; substrates where the helicase loads on a 3'-ssRNA tail (DNA:RNA and RNA:RNA) are not unwound. Unlike its M.smegmatis counterpart, the ATPase is not ssDNA-dependent. Forms a clamp around the ssDNA loading strand. Functionally, excises uracil residues from DNA; forked DNA with a dU residue is the best substrate followed by ssDNA. Inactive on dsDNA with a dU residue or DNA with an 8-oxoguanine residue. Uracil residues in DNA can arise as a result of misincorporation of dUMP residues by DNA polymerase or due to deamination of cytosine. The chain is Lhr helicase/uracil glycosylase from Escherichia coli (strain K12).